Consider the following 488-residue polypeptide: Probable indole-3-acetic acid-amido synthetase GH3.6 (488 aa).

Belongs to the IAA-amido conjugating enzyme family. As to expression, expressed in roots and callus.

Functionally, may catalyze the synthesis of indole-3-acetic acid (IAA)-amino acid conjugates, providing a mechanism for the plant to cope with the presence of excess auxin. This Oryza sativa subsp. japonica (Rice) protein is Probable indole-3-acetic acid-amido synthetase GH3.6 (GH3.6).